A 476-amino-acid chain; its full sequence is TOM1-like protein 1 (476 aa).

In terms of domain architecture, VHS spans 22–154 (ATFAGVQTED…DLVKKGVQFP (133 aa)). Residues 155-179 (PSEAEAETARQETAQISSNPPTSVP) form a disordered region. Positions 170-179 (ISSNPPTSVP) are enriched in polar residues. Position 171 is a phosphoserine (Ser-171). Positions 200 to 288 (EQIGKLHSEL…AILGYERFTR (89 aa)) constitute a GAT domain. Residues 298–314 (KNQKEATNTTSEPSAPS) are compositionally biased toward polar residues. The disordered stretch occupies residues 298–327 (KNQKEATNTTSEPSAPSQDLLDLSPSPRMP). 3 positions are modified to phosphoserine: Ser-314, Ser-321, and Ser-323. The interval 392–395 (YDNF) is interaction with GRB2. An SH3-binding motif is present at residues 421–425 (LPPLP). Residues 442–445 (YEVM) are interaction with PIK3R1. Tyr-460 is modified (phosphotyrosine). The SH2-binding motif lies at 460-463 (YEEI).

Belongs to the TOM1 family. In terms of assembly, interacts with FYN, GRB2 and PIK3R1 when phosphorylated. Interacts with LYN. In terms of processing, phosphorylated on tyrosines by FYN and LYN.

The protein resides in the golgi apparatus. It localises to the golgi stack. It is found in the endosome membrane. The protein localises to the cytoplasm. Its subcellular location is the membrane. Probable adapter protein involved in signaling pathways. Interacts with the SH2 and SH3 domains of various signaling proteins when it is phosphorylated. May promote FYN activation, possibly by disrupting intramolecular SH3-dependent interactions. The protein is TOM1-like protein 1 (TOM1L1) of Homo sapiens (Human).